A 545-amino-acid chain; its full sequence is Thermosome subunit (545 aa).

The protein belongs to the TCP-1 chaperonin family. In terms of assembly, forms an oligomeric complex of eight-membered rings.

Molecular chaperone; binds unfolded polypeptides in vitro, and has a weak ATPase activity. The chain is Thermosome subunit (ths) from Methanopyrus kandleri (strain AV19 / DSM 6324 / JCM 9639 / NBRC 100938).